A 264-amino-acid polypeptide reads, in one-letter code: [LysW]-aminoadipate/[LysW]-glutamate kinase (264 aa).

Substrate-binding positions include 35-36 (GG), arginine 62, and asparagine 167.

This sequence belongs to the acetylglutamate kinase family. LysZ subfamily.

It is found in the cytoplasm. It catalyses the reaction [amino-group carrier protein]-C-terminal-N-(1,4-dicarboxybutan-1-yl)-L-glutamine + ATP = [amino-group carrier protein]-C-terminal-N-(1-carboxy-5-phosphooxy-5-oxopentan-1-yl)-L-glutamine + ADP. The catalysed reaction is [amino-group carrier protein]-C-terminal-gamma-(L-glutamyl)-L-glutamate + ATP = [amino-group carrier protein]-C-terminal-gamma-(5-phospho-L-glutamyl)-L-glutamate + ADP. It functions in the pathway amino-acid biosynthesis; L-lysine biosynthesis via AAA pathway; L-lysine from L-alpha-aminoadipate (Thermus route): step 2/5. It participates in amino-acid biosynthesis; L-arginine biosynthesis. In terms of biological role, involved in both the arginine and lysine biosynthetic pathways. Phosphorylates the LysW-bound precursors glutamate (for arginine biosynthesis), respectively alpha-aminoadipate (for lysine biosynthesis). This is [LysW]-aminoadipate/[LysW]-glutamate kinase from Saccharolobus solfataricus (strain ATCC 35092 / DSM 1617 / JCM 11322 / P2) (Sulfolobus solfataricus).